The chain runs to 283 residues: Alpha-ketoglutarate-dependent taurine dioxygenase (283 aa).

Taurine is bound by residues histidine 70, tyrosine 73, and asparagine 95. Fe cation contacts are provided by histidine 99 and aspartate 101. Taurine is bound at residue valine 102. Residue threonine 126 coordinates 2-oxoglutarate. Residues tryptophan 128, tryptophan 240, and tryptophan 248 each carry the 3-hydroxytryptophan; by autocatalysis modification. Position 255 (histidine 255) interacts with Fe cation. 2-oxoglutarate contacts are provided by histidine 255, arginine 266, and arginine 270. Residue arginine 270 participates in taurine binding.

This sequence belongs to the TfdA dioxygenase family. Homodimer. Was later shown to be a homotetramer arranged as a dimer of two dimers. It depends on Fe(2+) as a cofactor.

The catalysed reaction is taurine + 2-oxoglutarate + O2 = aminoacetaldehyde + sulfite + succinate + CO2 + H(+). It functions in the pathway organosulfur degradation; taurine degradation via aerobic pathway; aminoacetaldehyde and sulfite from taurine: step 1/1. With respect to regulation, activated by ascorbate and inhibited by divalent metal ions such as zinc, copper and cobalt. Functionally, catalyzes the alpha-ketoglutarate-dependent hydroxylation of taurine yielding sulfite and aminoacetaldehyde after decomposition of an unstable intermediate. Is required for the utilization of taurine (2-aminoethanesulfonate) as an alternative sulfur source for growth in the absence of sulfate. To a lesser extent, pentanesulfonate, 3-(N-morpholino)propanesulfonate and 1,3-dioxo-2-isoindolineethanesulfonate are also desulfonated by this enzyme in vitro; however, desulfonation by TauD of organosulfonates other than taurine seem to be of little or no importance for sulfur metabolism in vivo. The chain is Alpha-ketoglutarate-dependent taurine dioxygenase (tauD) from Escherichia coli (strain K12).